The sequence spans 205 residues: Pyridoxal 5'-phosphate synthase subunit PdxT (205 aa).

53–55 (GES) provides a ligand contact to L-glutamine. Cys85 acts as the Nucleophile in catalysis. L-glutamine-binding positions include Arg112 and 140–141 (IR). Catalysis depends on charge relay system residues His176 and Glu178.

The protein belongs to the glutaminase PdxT/SNO family. In terms of assembly, in the presence of PdxS, forms a dodecamer of heterodimers. Only shows activity in the heterodimer.

The enzyme catalyses aldehydo-D-ribose 5-phosphate + D-glyceraldehyde 3-phosphate + L-glutamine = pyridoxal 5'-phosphate + L-glutamate + phosphate + 3 H2O + H(+). The catalysed reaction is L-glutamine + H2O = L-glutamate + NH4(+). Its pathway is cofactor biosynthesis; pyridoxal 5'-phosphate biosynthesis. Functionally, catalyzes the hydrolysis of glutamine to glutamate and ammonia as part of the biosynthesis of pyridoxal 5'-phosphate. The resulting ammonia molecule is channeled to the active site of PdxS. The polypeptide is Pyridoxal 5'-phosphate synthase subunit PdxT (Haloquadratum walsbyi (strain DSM 16790 / HBSQ001)).